The sequence spans 377 residues: Nitric oxide reductase FlRd-NAD(+) reductase (377 aa).

It belongs to the FAD-dependent oxidoreductase family. It depends on FAD as a cofactor.

The protein resides in the cytoplasm. The enzyme catalyses 2 reduced [nitric oxide reductase rubredoxin domain] + NAD(+) + H(+) = 2 oxidized [nitric oxide reductase rubredoxin domain] + NADH. It functions in the pathway nitrogen metabolism; nitric oxide reduction. One of at least two accessory proteins for anaerobic nitric oxide (NO) reductase. Reduces the rubredoxin moiety of NO reductase. The polypeptide is Nitric oxide reductase FlRd-NAD(+) reductase (Escherichia coli O6:H1 (strain CFT073 / ATCC 700928 / UPEC)).